We begin with the raw amino-acid sequence, 671 residues long: tRNA(Met) cytidine acetyltransferase TmcA (671 aa).

ATP contacts are provided by residues Q180, 202–211 (GRGKSALAGQ), and R319. The N-acetyltransferase domain occupies 349-531 (IRFSAFTQAL…SGCYTAMALL (183 aa)). Acetyl-CoA-binding positions include 461-463 (IAV), 468-474 (QREGIGQ), E499, and R506.

It belongs to the RNA cytidine acetyltransferase family. TmcA subfamily.

It is found in the cytoplasm. It catalyses the reaction cytidine(34) in elongator tRNA(Met) + acetyl-CoA + ATP + H2O = N(4)-acetylcytidine(34) in elongator tRNA(Met) + ADP + phosphate + CoA + H(+). In terms of biological role, catalyzes the formation of N(4)-acetylcytidine (ac(4)C) at the wobble position of tRNA(Met), by using acetyl-CoA as an acetyl donor and ATP (or GTP). This is tRNA(Met) cytidine acetyltransferase TmcA from Citrobacter koseri (strain ATCC BAA-895 / CDC 4225-83 / SGSC4696).